Consider the following 200-residue polypeptide: Gene 55 protein (200 aa).

C8 is lipidated: S-palmitoyl cysteine; by host.

It belongs to the herpesviridae UL51 family. In terms of assembly, oligomerizes. Interacts with ORF42; this interaction mediates ORF42 incorporation to virions. Post-translationally, phosphorylated. In terms of processing, palmitoylation is necessary for Golgi localization.

It localises to the virion tegument. The protein localises to the host cytoplasm. It is found in the host Golgi apparatus. Functionally, plays several roles during the time course of infection, including egress of virus particles from the perinuclear space and secondary envelopment of cytoplasmic capsids that bud into specific trans-Golgi network (TGN)-derived membranes. This chain is Gene 55 protein (55), found in Saimiriine herpesvirus 2 (strain 11) (SaHV-2).